The sequence spans 129 residues: ATP synthase epsilon chain (129 aa).

It belongs to the ATPase epsilon chain family. As to quaternary structure, F-type ATPases have 2 components, CF(1) - the catalytic core - and CF(0) - the membrane proton channel. CF(1) has five subunits: alpha(3), beta(3), gamma(1), delta(1), epsilon(1). CF(0) has three main subunits: a, b and c.

Its subcellular location is the cell inner membrane. Its function is as follows. Produces ATP from ADP in the presence of a proton gradient across the membrane. The sequence is that of ATP synthase epsilon chain from Campylobacter jejuni subsp. jejuni serotype O:6 (strain 81116 / NCTC 11828).